Reading from the N-terminus, the 316-residue chain is Conjugated bile acid hydrolase (316 aa).

The active-site Nucleophile is C2. Residues C2 and R18 each coordinate deoxycholate. N81 provides a ligand contact to taurine.

Belongs to the peptidase C59 family.

It catalyses the reaction cholate + taurine = taurocholate + H2O. The enzyme catalyses taurochenodeoxycholate + H2O = chenodeoxycholate + taurine. The catalysed reaction is taurodeoxycholate + H2O = deoxycholate + taurine. It carries out the reaction glycocholate + H2O = cholate + glycine. It catalyses the reaction glycodeoxycholate + H2O = deoxycholate + glycine. The protein operates within lipid metabolism; bile acid biosynthesis. Bile salt hydrolase that catalyzes the deconjugation of glycine- and taurine-linked bile salts, which occurs naturally in the intestines of humans, releasing amino acid residues and deconjugated bile salts (bile acids). Can hydrolyze the amide bond in the bile salts taurocholate (TCA), taurodeoxycholate (TDCA), taurochenodeoxycholate (TCDCA), glycocholate (GCA) and glycodeoxycholate (GDCA). Shows highest activity toward the taurine-conjugated bile salts TCA and TCDCA. The activity toward the other three substrates (TDCA, GCA and GDCA) is relatively low. This enzyme likely contributes to bile salt resistance of the strain and may be associated with survival capability of strain JCM1131 within the human intestine by bile detoxification. This chain is Conjugated bile acid hydrolase, found in Lactobacillus gasseri (strain ATCC 33323 / DSM 20243 / BCRC 14619 / CIP 102991 / JCM 1131 / KCTC 3163 / NCIMB 11718 / NCTC 13722 / AM63).